The primary structure comprises 595 residues: Grainyhead-like protein 3 homolog (595 aa).

The segment at 29–92 (DAWSKYLENP…CDQVKRSCSE (64 aa)) is transcription activation. The Grh/CP2 DB domain occupies 221–454 (ANRDFEYTLE…DMETHPVLFI (234 aa)). Residues 484 to 505 (SSQSFPKGLEAPPSKQQTSEDS) are disordered.

This sequence belongs to the grh/CP2 family. Grainyhead subfamily.

The protein localises to the nucleus. Transcription factor playing important roles in primary neurulation and in the differentiation of stratified epithelia of both ectodermal and endodermal origin. Binds directly to the consensus DNA sequence 5'-AACCGGTT-3' acting as an activator and repressor on distinct target genes. The sequence is that of Grainyhead-like protein 3 homolog (grhl3) from Xenopus laevis (African clawed frog).